A 414-amino-acid chain; its full sequence is uncharacterized protein (414 aa).

The first 18 residues, 1–18 (MLKRLMLASAILPVVSFA), serve as a signal peptide directing secretion.

This is an uncharacterized protein from Aquifex aeolicus (strain VF5).